An 848-amino-acid polypeptide reads, in one-letter code: Adenylate cyclase (848 aa).

The catalytic stretch occupies residues 1–535; it reads MYLYIETLKQ…DISHHFPLRL (535 aa). Residues 541–848 are regulatory; the sequence is KALYSPCEIR…SQPAQQFQLH (308 aa).

It belongs to the adenylyl cyclase class-1 family.

The protein resides in the cytoplasm. The catalysed reaction is ATP = 3',5'-cyclic AMP + diphosphate. Its activity is regulated as follows. The regulatory domain is involved in the regulation of cyclase activity by the carbon source. This Yersinia intermedia protein is Adenylate cyclase (cya).